The sequence spans 203 residues: NADH-quinone oxidoreductase subunit C (203 aa).

The protein belongs to the complex I 30 kDa subunit family. As to quaternary structure, NDH-1 is composed of 14 different subunits. Subunits NuoB, C, D, E, F, and G constitute the peripheral sector of the complex.

The protein localises to the cell inner membrane. It carries out the reaction a quinone + NADH + 5 H(+)(in) = a quinol + NAD(+) + 4 H(+)(out). In terms of biological role, NDH-1 shuttles electrons from NADH, via FMN and iron-sulfur (Fe-S) centers, to quinones in the respiratory chain. The immediate electron acceptor for the enzyme in this species is believed to be ubiquinone. Couples the redox reaction to proton translocation (for every two electrons transferred, four hydrogen ions are translocated across the cytoplasmic membrane), and thus conserves the redox energy in a proton gradient. The sequence is that of NADH-quinone oxidoreductase subunit C from Polaromonas sp. (strain JS666 / ATCC BAA-500).